Here is a 628-residue protein sequence, read N- to C-terminus: Glutamyl-tRNA(Gln) amidotransferase subunit E (628 aa).

This sequence belongs to the GatB/GatE family. GatE subfamily. In terms of assembly, heterodimer of GatD and GatE.

It carries out the reaction L-glutamyl-tRNA(Gln) + L-glutamine + ATP + H2O = L-glutaminyl-tRNA(Gln) + L-glutamate + ADP + phosphate + H(+). Its function is as follows. Allows the formation of correctly charged Gln-tRNA(Gln) through the transamidation of misacylated Glu-tRNA(Gln) in organisms which lack glutaminyl-tRNA synthetase. The reaction takes place in the presence of glutamine and ATP through an activated gamma-phospho-Glu-tRNA(Gln). The GatDE system is specific for glutamate and does not act on aspartate. This Sulfurisphaera tokodaii (strain DSM 16993 / JCM 10545 / NBRC 100140 / 7) (Sulfolobus tokodaii) protein is Glutamyl-tRNA(Gln) amidotransferase subunit E.